The chain runs to 135 residues: Ribonuclease P protein component 2 (135 aa).

The protein belongs to the eukaryotic/archaeal RNase P protein component 2 family. In terms of assembly, consists of a catalytic RNA component and at least 4-5 protein subunits.

The protein localises to the cytoplasm. It carries out the reaction Endonucleolytic cleavage of RNA, removing 5'-extranucleotides from tRNA precursor.. Part of ribonuclease P, a protein complex that generates mature tRNA molecules by cleaving their 5'-ends. This is Ribonuclease P protein component 2 from Methanosarcina barkeri (strain Fusaro / DSM 804).